The sequence spans 281 residues: Splicing regulator RBM11 (281 aa).

One can recognise an RRM domain in the interval 10-87; sequence RTVFVGNLEA…RPINVQYRFG (78 aa). The segment at 184-281 is disordered; that stretch reads PSSYKWTHQQ…FRKSKKKKRY (98 aa). Polar residues-rich tracts occupy residues 187–217 and 229–242; these read YKWTHQQPSDSDLYQMTAPLPNSASVSSSLN and YKWTHQQPSDSDLY. A Bipartite nuclear localization signal motif is present at residues 245–280; sequence NKRKRQKQTSDSDSSTDNNRGNECSQKFRKSKKKKR. The span at 271-281 shows a compositional bias: basic residues; the sequence is KFRKSKKKKRY.

Homodimer. Expressed in brain, hippocampus, prefrontal cortex, cerebellum, spinal cord, testis, mammary gland, spleen and kidney. Also expressed in fetal brain.

It is found in the nucleus. The protein resides in the nucleoplasm. It localises to the nucleus speckle. Its function is as follows. Tissue-specific splicing factor with potential implication in the regulation of alternative splicing during neuron and germ cell differentiation. Antagonizes SRSF1-mediated BCL-X splicing. May affect the choice of alternative 5' splice sites by binding to specific sequences in exons and antagonizing the SR protein SRSF1. In Homo sapiens (Human), this protein is Splicing regulator RBM11.